Reading from the N-terminus, the 150-residue chain is MRCPYCQFEDTRVIDSRLASEGEQVRRRRECNRCGERFTTYETAELALPRIVKRDGTREPWDEGKLRQGMLRALEKRPVATEAVEAALFRIRQRLRATGEREVSASQLGEWVMEELRELDQVAYVRFASVYRSFEDVSAFREVIEGLEKR.

A zinc finger spans residues 3-34 (CPYCQFEDTRVIDSRLASEGEQVRRRRECNRC). The ATP-cone domain occupies 49–139 (PRIVKRDGTR…VYRSFEDVSA (91 aa)).

The protein belongs to the NrdR family. The cofactor is Zn(2+).

Functionally, negatively regulates transcription of bacterial ribonucleotide reductase nrd genes and operons by binding to NrdR-boxes. The chain is Transcriptional repressor NrdR from Alkalilimnicola ehrlichii (strain ATCC BAA-1101 / DSM 17681 / MLHE-1).